The sequence spans 843 residues: Urease (843 aa).

One can recognise a Urease domain in the interval 400–843 (GGIDCHVHFI…VPLSRNYFLF (444 aa)). Ni(2+)-binding residues include His405, His407, and Lys488. The residue at position 488 (Lys488) is an N6-carboxylysine. Residue His490 coordinates substrate. 2 residues coordinate Ni(2+): His517 and His543. His591 (proton donor) is an active-site residue. Ni(2+) is bound at residue Asp631.

In the C-terminal section; belongs to the metallo-dependent hydrolases superfamily. Urease alpha subunit family. In terms of assembly, homohexamer. Other oligomeric forms may exist depending on pH and presence of salts. Ni(2+) is required as a cofactor. In terms of processing, carboxylation allows a single lysine to coordinate two nickel ions.

It carries out the reaction urea + 2 H2O + H(+) = hydrogencarbonate + 2 NH4(+). Its pathway is nitrogen metabolism; urea degradation; CO(2) and NH(3) from urea (urease route): step 1/1. In terms of biological role, urea hydrolase involved in nitrogen recycling from ureide, purine, and arginine catabolism. The protein is Urease of Oryza sativa subsp. indica (Rice).